We begin with the raw amino-acid sequence, 238 residues long: Ribonuclease PH (238 aa).

Phosphate-binding positions include Arg-86 and 124–126 (GTR).

The protein belongs to the RNase PH family. In terms of assembly, homohexameric ring arranged as a trimer of dimers.

It catalyses the reaction tRNA(n+1) + phosphate = tRNA(n) + a ribonucleoside 5'-diphosphate. Functionally, phosphorolytic 3'-5' exoribonuclease that plays an important role in tRNA 3'-end maturation. Removes nucleotide residues following the 3'-CCA terminus of tRNAs; can also add nucleotides to the ends of RNA molecules by using nucleoside diphosphates as substrates, but this may not be physiologically important. Probably plays a role in initiation of 16S rRNA degradation (leading to ribosome degradation) during starvation. In Aliivibrio salmonicida (strain LFI1238) (Vibrio salmonicida (strain LFI1238)), this protein is Ribonuclease PH.